We begin with the raw amino-acid sequence, 275 residues long: Testis-specific gene 13 protein (275 aa).

Residues 1 to 20 show a composition bias toward polar residues; it reads MSQKRQTKFQNGKSKTSENS. A disordered region spans residues 1–28; that stretch reads MSQKRQTKFQNGKSKTSENSSAKREKGM.

In terms of tissue distribution, testis-specific.

In Homo sapiens (Human), this protein is Testis-specific gene 13 protein (TSGA13).